Consider the following 37-residue polypeptide: Photosystem I reaction center subunit VIII (37 aa).

Residues 9 to 29 form a helical membrane-spanning segment; that stretch reads SIFVPLVGLVFPAIAMASLFL.

This sequence belongs to the PsaI family.

It localises to the plastid. The protein resides in the chloroplast thylakoid membrane. In terms of biological role, may help in the organization of the PsaL subunit. The sequence is that of Photosystem I reaction center subunit VIII from Cucumis sativus (Cucumber).